The sequence spans 263 residues: Type III pantothenate kinase (263 aa).

Residue 14–21 (DIGNTSVN) participates in ATP binding. Substrate is bound at residue 115–118 (GADR). Asp117 (proton acceptor) is an active-site residue. Asp137 contacts K(+). Thr140 serves as a coordination point for ATP. Residue Thr192 participates in substrate binding.

The protein belongs to the type III pantothenate kinase family. Homodimer. NH4(+) is required as a cofactor. The cofactor is K(+).

The protein resides in the cytoplasm. The enzyme catalyses (R)-pantothenate + ATP = (R)-4'-phosphopantothenate + ADP + H(+). It functions in the pathway cofactor biosynthesis; coenzyme A biosynthesis; CoA from (R)-pantothenate: step 1/5. Its function is as follows. Catalyzes the phosphorylation of pantothenate (Pan), the first step in CoA biosynthesis. This Dehalococcoides mccartyi (strain CBDB1) protein is Type III pantothenate kinase.